Consider the following 446-residue polypeptide: Transcription factor Dp-2 (446 aa).

T2 is modified (N-acetylthreonine). S24 bears the Phosphoserine mark. The tract at residues 60-82 is interaction with CEBPA; sequence PQMIISTPQRLTSSGSVLIGSPY. The short motif at 103–118 is the Nuclear localization signal element; that stretch reads GDRKRARKFIDSDFSE. Position 122 is a phosphoserine (S122). Residues 129–210 mediate DNA binding; that stretch reads GKGLRHFSMK…KKEIKWIGLP (82 aa). The DEF box signature appears at 176–210; that stretch reads DQKNIRRRVYDALNVLMAMNIISKEKKEIKWIGLP. Residues 219 to 292 are dimerization; that stretch reads NLEIEKQRRI…RKTVIDCSIS (74 aa). The segment at 229-261 is DCB1; sequence ERIKQKRAQLQELLLQQIAFKNLVQRNRQNEQQ. The tract at residues 274 to 330 is DCB2; sequence LPFIIINTSRKTVIDCSISSDKFEYLFNFDNTFEIHDDIEVLKRMGMSFGLESGKCS. Low complexity predominate over residues 409-419; it reads SHQSSSAASHC. The interval 409 to 446 is disordered; that stretch reads SHQSSSAASHCSESRGETPCSFNDEDEEDDEEDSSSPE. Positions 431 to 446 are enriched in acidic residues; it reads NDEDEEDDEEDSSSPE.

Belongs to the E2F/DP family. Component of the DRTF1/E2F transcription factor complex. Forms heterodimers with E2F family members. The complex can interact with hypophosphorylated retinoblastoma protein RB1 and related proteins (RBL1 and RBL2) that inhibit the E2F transactivation domain. During the cell cycle, RB becomes phosphorylated in mid-to-late G1 phase, detaches from the DRTF1/E2F complex rendering E2F transcriptionally active. Viral oncoproteins, notably E1A, T-antigen and HPV E7, are capable of sequestering RB protein, thus releasing the active complex. Interacts with GMCL. Component of the DREAM complex (also named LINC complex) at least composed of E2F4, E2F5, LIN9, LIN37, LIN52, LIN54, MYBL1, MYBL2, RBL1, RBL2, RBBP4, TFDP1 and TFDP2. The complex exists in quiescent cells where it represses cell cycle-dependent genes. It dissociates in S phase when LIN9, LIN37, LIN52 and LIN54 form a subcomplex that binds to MYBL2. The complex TFDP2:E2F1 interacts with CEBPA; the interaction prevents CEBPA binding to target genes promoters and represses its transcriptional activity. In terms of processing, ser-24 is probably phosphorylated by CDK2. As to expression, high levels in heart and skeletal muscle. Also found in placenta, kidney, brain, lung and liver. The presence as well as the abundance of the different transcripts appear to vary significantly in different tissues and cell lines.

The protein localises to the nucleus. Can stimulate E2F-dependent transcription. Binds DNA cooperatively with E2F family members through the E2 recognition site, 5'-TTTC[CG]CGC-3', found in the promoter region of a number of genes whose products are involved in cell cycle regulation or in DNA replication. The TFDP2:E2F complex functions in the control of cell-cycle progression from G1 to S phase. The E2F1:DP complex appears to mediate both cell proliferation and apoptosis. Blocks adipocyte differentiation by repressing CEBPA binding to its target gene promoters. This Homo sapiens (Human) protein is Transcription factor Dp-2 (TFDP2).